Consider the following 98-residue polypeptide: Keratin-associated protein 3-1 (98 aa).

N-acetylalanine is present on Ala2. 4 tandem repeats follow at residues 3–7 (CCAPR), 8–12 (CCSVR), 47–51 (FCDNS), and 55–59 (YHVPD). Residues 3–59 (CCAPRCCSVRTGPATTICSSDQFCRCGVCLPSTCPHDISLLQPTFCDNSPVPYHVPD) form a 4 X 5 AA repeats of C-C-X(3) region.

This sequence belongs to the KRTAP type 3 family. Interacts with wool keratins. As to expression, wool.

Its function is as follows. In the wool cortex, wool keratin intermediate filaments are embedded in an interfilamentous matrix, consisting of hair keratin-associated proteins (KRTAP), which are essential for the formation of a rigid and resistant wool shaft through their extensive disulfide bond cross-linking with abundant cysteine residues of wool keratins. The matrix proteins include the high-sulfur and high-glycine-tyrosine keratins. This chain is Keratin-associated protein 3-1 (KRTAP3-1), found in Capra hircus (Goat).